Consider the following 78-residue polypeptide: Toxin BmTxKS4 (78 aa).

The N-terminal stretch at 1-21 (MKLKISFLILVLFSVFFAIEG) is a signal peptide. The propeptide occupies 22-32 (IIKWFPASVNG).

In terms of processing, contains 3 disulfide bonds. In terms of tissue distribution, expressed by the venom gland.

It is found in the secreted. Its function is as follows. Reversibly inhibits potassium channels. The polypeptide is Toxin BmTxKS4 (Olivierus martensii (Manchurian scorpion)).